Consider the following 394-residue polypeptide: Phosphoglycerate kinase (394 aa).

Residues 21–23, Arg-36, 59–62, Arg-118, and Arg-151 contribute to the substrate site; these read DFN and HLGR. Residues Lys-202, Gly-293, Glu-324, and 350–353 contribute to the ATP site; that span reads GGDS.

Belongs to the phosphoglycerate kinase family. Monomer.

It localises to the cytoplasm. The catalysed reaction is (2R)-3-phosphoglycerate + ATP = (2R)-3-phospho-glyceroyl phosphate + ADP. The protein operates within carbohydrate degradation; glycolysis; pyruvate from D-glyceraldehyde 3-phosphate: step 2/5. The protein is Phosphoglycerate kinase of Exiguobacterium sp. (strain ATCC BAA-1283 / AT1b).